Here is a 901-residue protein sequence, read N- to C-terminus: Probable inorganic carbon transporter subunit DabA (901 aa).

4 residues coordinate Zn(2+): cysteine 424, aspartate 426, histidine 606, and cysteine 621.

This sequence belongs to the inorganic carbon transporter (TC 9.A.2) DabA family. In terms of assembly, forms a complex with DabB. Zn(2+) is required as a cofactor.

The protein localises to the cell membrane. Its function is as follows. Part of an energy-coupled inorganic carbon pump. The polypeptide is Probable inorganic carbon transporter subunit DabA (Staphylococcus aureus (strain bovine RF122 / ET3-1)).